Reading from the N-terminus, the 178-residue chain is Interleukin-10 (178 aa).

The first 18 residues, 1–18 (MHSSALLCCLVLLTGVRA), serve as a signal peptide directing secretion. 2 cysteine pairs are disulfide-bonded: C30–C126 and C80–C132. N-linked (GlcNAc...) asparagine glycosylation is present at N134.

This sequence belongs to the IL-10 family. In terms of assembly, homodimer. Interacts with IL10RA and IL10RB.

Its subcellular location is the secreted. Its function is as follows. Major immune regulatory cytokine that acts on many cells of the immune system where it has profound anti-inflammatory functions, limiting excessive tissue disruption caused by inflammation. Mechanistically, IL10 binds to its heterotetrameric receptor comprising IL10RA and IL10RB leading to JAK1 and STAT2-mediated phosphorylation of STAT3. In turn, STAT3 translocates to the nucleus where it drives expression of anti-inflammatory mediators. Targets antigen-presenting cells (APCs) such as macrophages and monocytes and inhibits their release of pro-inflammatory cytokines including granulocyte-macrophage colony-stimulating factor /GM-CSF, granulocyte colony-stimulating factor/G-CSF, IL-1 alpha, IL-1 beta, IL-6, IL-8 and TNF-alpha. Also interferes with antigen presentation by reducing the expression of MHC-class II and co-stimulatory molecules, thereby inhibiting their ability to induce T cell activation. In addition, controls the inflammatory response of macrophages by reprogramming essential metabolic pathways including mTOR signaling. This chain is Interleukin-10 (IL10), found in Cercocebus atys (Sooty mangabey).